The chain runs to 532 residues: Glucose-6-phosphate isomerase (532 aa).

Glu322 serves as the catalytic Proton donor. Catalysis depends on residues His351 and Lys457.

This sequence belongs to the GPI family.

The protein localises to the cytoplasm. It catalyses the reaction alpha-D-glucose 6-phosphate = beta-D-fructose 6-phosphate. It functions in the pathway carbohydrate biosynthesis; gluconeogenesis. The protein operates within carbohydrate degradation; glycolysis; D-glyceraldehyde 3-phosphate and glycerone phosphate from D-glucose: step 2/4. Functionally, catalyzes the reversible isomerization of glucose-6-phosphate to fructose-6-phosphate. The polypeptide is Glucose-6-phosphate isomerase (Synechococcus sp. (strain JA-3-3Ab) (Cyanobacteria bacterium Yellowstone A-Prime)).